The sequence spans 238 residues: Putative ABC transporter ATP-binding protein AF_1841 (238 aa).

One can recognise an ABC transporter domain in the interval 8–238 (IEADSVSYDY…EELLEKAGVI (231 aa)). 41 to 48 (GANGSGKS) contacts ATP.

It belongs to the ABC transporter superfamily.

It is found in the cell membrane. In terms of biological role, probably part of an ABC transporter complex. Responsible for energy coupling to the transport system. This chain is Putative ABC transporter ATP-binding protein AF_1841, found in Archaeoglobus fulgidus (strain ATCC 49558 / DSM 4304 / JCM 9628 / NBRC 100126 / VC-16).